A 150-amino-acid polypeptide reads, in one-letter code: 3-dehydroquinate dehydratase (150 aa).

The Proton acceptor role is filled by Tyr26. Residues Asn77, His83, and Asp90 each contribute to the substrate site. The active-site Proton donor is the His103. Substrate is bound by residues 104 to 105 and Arg114; that span reads IS.

It belongs to the type-II 3-dehydroquinase family. Homododecamer.

It carries out the reaction 3-dehydroquinate = 3-dehydroshikimate + H2O. The protein operates within metabolic intermediate biosynthesis; chorismate biosynthesis; chorismate from D-erythrose 4-phosphate and phosphoenolpyruvate: step 3/7. Its function is as follows. Catalyzes a trans-dehydration via an enolate intermediate. The protein is 3-dehydroquinate dehydratase of Buchnera aphidicola subsp. Acyrthosiphon pisum (strain 5A).